A 116-amino-acid polypeptide reads, in one-letter code: uncharacterized protein (116 aa).

Residues 22–42 (LIFLVVNLKVPAVGLELFLLV) form a helical membrane-spanning segment.

It is found in the membrane. This is an uncharacterized protein from Saccharomyces cerevisiae (strain ATCC 204508 / S288c) (Baker's yeast).